The primary structure comprises 387 residues: MAITKYLVSALAVAGLAFAKDCAGDLTIENQQDVSTLSSCEKWDGDIVISEVVKSSISLTGVKQITGSLKAKNSSITELSAPNLNSIGDALSLSTCTALRSLDLSSLTKVKTLSLEALPKLQALGFTRTVSQATSILITNTDLTSLQGLDLETVGDFMVTNNPHLMEINVNKMTNITGYLNFAANNKQLSVKFPNLEGAHNMTFRNVSDASLPSLHKMDGLLGFYSNFFMNISAPNLTATGDLVFTSNSAVMNISMPKLETVKGGLQLANNSLLEDIEGFPALKLITGALDITGKFKTVKLPSLKEVRGDANLQSTETFGCDPWQKLKDSDVIRGKLTCRERQEKPKTGDDHSGGDEEGHKGAAAAFAKAPAAALLIAFVGALQFFL.

Residues 1 to 19 (MAITKYLVSALAVAGLAFA) form the signal peptide. N-linked (GlcNAc...) asparagine glycosylation is found at N73, N175, N201, N206, N231, N236, N253, and N270. Residues 338 to 361 (TCRERQEKPKTGDDHSGGDEEGHK) are compositionally biased toward basic and acidic residues. The tract at residues 338–362 (TCRERQEKPKTGDDHSGGDEEGHKG) is disordered. A lipid anchor (GPI-anchor amidated alanine) is attached at A364. Positions 365-387 (AAFAKAPAAALLIAFVGALQFFL) are cleaved as a propeptide — removed in mature form.

It belongs to the SPS2 family. Post-translationally, the GPI-anchor is attached to the protein in the endoplasmic reticulum and serves to target the protein to the cell surface. There, the glucosamine-inositol phospholipid moiety is cleaved off and the GPI-modified mannoprotein is covalently attached via its lipidless GPI glycan remnant to the 1,6-beta-glucan of the outer cell wall layer.

It is found in the cell membrane. Its subcellular location is the secreted. It localises to the cell wall. Functionally, required for proper cell wall integrity and for the correct assembly of the mannoprotein outer layer of the cell wall. The chain is Cell surface GPI-anchored protein ARB_01627 from Arthroderma benhamiae (strain ATCC MYA-4681 / CBS 112371) (Trichophyton mentagrophytes).